The sequence spans 91 residues: Essential MCU regulator, mitochondrial (91 aa).

Residues 45-65 traverse the membrane as a helical segment; it reads VIPFGLLGVVLTVIPGLLIGA.

Belongs to the SMDT1/EMRE family.

The protein localises to the mitochondrion inner membrane. Its function is as follows. Essential regulatory subunit of the mitochondrial calcium uniporter (mcu) channel, a protein that mediates calcium uptake into mitochondria. In Aedes aegypti (Yellowfever mosquito), this protein is Essential MCU regulator, mitochondrial.